A 267-amino-acid polypeptide reads, in one-letter code: Phosphatidylserine decarboxylase proenzyme (267 aa).

Active-site charge relay system; for autoendoproteolytic cleavage activity residues include D78, H132, and S236. The active-site Schiff-base intermediate with substrate; via pyruvic acid; for decarboxylase activity is S236. A Pyruvic acid (Ser); by autocatalysis modification is found at S236.

Belongs to the phosphatidylserine decarboxylase family. PSD-B subfamily. Prokaryotic type I sub-subfamily. As to quaternary structure, heterodimer of a large membrane-associated beta subunit and a small pyruvoyl-containing alpha subunit. It depends on pyruvate as a cofactor. Is synthesized initially as an inactive proenzyme. Formation of the active enzyme involves a self-maturation process in which the active site pyruvoyl group is generated from an internal serine residue via an autocatalytic post-translational modification. Two non-identical subunits are generated from the proenzyme in this reaction, and the pyruvate is formed at the N-terminus of the alpha chain, which is derived from the carboxyl end of the proenzyme. The autoendoproteolytic cleavage occurs by a canonical serine protease mechanism, in which the side chain hydroxyl group of the serine supplies its oxygen atom to form the C-terminus of the beta chain, while the remainder of the serine residue undergoes an oxidative deamination to produce ammonia and the pyruvoyl prosthetic group on the alpha chain. During this reaction, the Ser that is part of the protease active site of the proenzyme becomes the pyruvoyl prosthetic group, which constitutes an essential element of the active site of the mature decarboxylase.

Its subcellular location is the cell membrane. The enzyme catalyses a 1,2-diacyl-sn-glycero-3-phospho-L-serine + H(+) = a 1,2-diacyl-sn-glycero-3-phosphoethanolamine + CO2. It participates in phospholipid metabolism; phosphatidylethanolamine biosynthesis; phosphatidylethanolamine from CDP-diacylglycerol: step 2/2. Catalyzes the formation of phosphatidylethanolamine (PtdEtn) from phosphatidylserine (PtdSer). This chain is Phosphatidylserine decarboxylase proenzyme, found in Helicobacter pylori (strain Shi470).